Here is a 114-residue protein sequence, read N- to C-terminus: Beta-microseminoprotein J1 (114 aa).

The N-terminal stretch at 1-20 is a signal peptide; the sequence is MNVLLGGLVIFATFVTLCNA. 5 cysteine pairs are disulfide-bonded: Cys-22–Cys-70, Cys-38–Cys-62, Cys-57–Cys-93, Cys-60–Cys-69, and Cys-84–Cys-107.

The protein belongs to the beta-microseminoprotein family.

It is found in the secreted. This Saguinus oedipus (Cotton-top tamarin) protein is Beta-microseminoprotein J1 (MSPJ).